We begin with the raw amino-acid sequence, 609 residues long: Glutamine--fructose-6-phosphate aminotransferase [isomerizing] (609 aa).

Catalysis depends on Cys-2, which acts as the Nucleophile; for GATase activity. The Glutamine amidotransferase type-2 domain maps to 2 to 218 (CGIVGAVAQR…EGDVVEVTRR (217 aa)). 2 consecutive SIS domains span residues 286-426 (ADAL…LKGA) and 458-599 (LAEG…VDQP). The active-site For Fru-6P isomerization activity is Lys-604.

In terms of assembly, homodimer.

The protein localises to the cytoplasm. The enzyme catalyses D-fructose 6-phosphate + L-glutamine = D-glucosamine 6-phosphate + L-glutamate. In terms of biological role, catalyzes the first step in hexosamine metabolism, converting fructose-6P into glucosamine-6P using glutamine as a nitrogen source. The sequence is that of Glutamine--fructose-6-phosphate aminotransferase [isomerizing] from Yersinia pestis.